The sequence spans 180 residues: UPF0227 protein YcfP (180 aa).

This sequence belongs to the UPF0227 family.

This is UPF0227 protein YcfP from Escherichia coli O139:H28 (strain E24377A / ETEC).